Consider the following 159-residue polypeptide: Protein Smg homolog (159 aa).

This sequence belongs to the Smg family.

In Shewanella amazonensis (strain ATCC BAA-1098 / SB2B), this protein is Protein Smg homolog.